Reading from the N-terminus, the 175-residue chain is Small ribosomal subunit protein mS38 (175 aa).

Belongs to the mitochondrion-specific ribosomal protein mS38 family. In terms of assembly, component of the mitochondrial small ribosomal subunit (mt-SSU). Mature yeast 74S mitochondrial ribosomes consist of a small (37S) and a large (54S) subunit. The 37S small subunit contains a 15S ribosomal RNA (15S mt-rRNA) and at least 32 different proteins. The 54S large subunit contains a 21S rRNA (21S mt-rRNA) and at least 45 different proteins.

The protein resides in the mitochondrion. The protein localises to the mitochondrion inner membrane. Its function is as follows. Component of the mitochondrial ribosome (mitoribosome), a dedicated translation machinery responsible for the synthesis of mitochondrial genome-encoded proteins, including at least some of the essential transmembrane subunits of the mitochondrial respiratory chain. The mitoribosomes are attached to the mitochondrial inner membrane and translation products are cotranslationally integrated into the membrane. mS38 is also involved in the splicing of the COX1 mRNA. In Schizosaccharomyces pombe (strain 972 / ATCC 24843) (Fission yeast), this protein is Small ribosomal subunit protein mS38 (cox24).